We begin with the raw amino-acid sequence, 205 residues long: Rho-related GTP-binding protein RhoQ (205 aa).

16 to 23 (GDGAVGKT) provides a ligand contact to GTP. Positions 38–46 (YVPTVFDHY) match the Effector region motif. GTP is bound by residues 63 to 67 (DTAGQ) and 121 to 124 (TQID). Cysteine methyl ester is present on Cys-202. Cys-202 is lipidated: S-farnesyl cysteine. Positions 203–205 (LIT) are cleaved as a propeptide — removed in mature form.

The protein belongs to the small GTPase superfamily. Rho family. As to quaternary structure, interacts with CDC42EP4 in a GTP-dependent manner. Interacts with ARHGAP33/TCGAP. Interacts with CDC42EP1, CDC42EP2, CDC42EP3, PARD6A, PARD6G (and probably PARD6B) in a GTP-dependent manner. Part of a quaternary complex containing PARD3, some PARD6 protein (PARD6A, PARD6B or PARD6G) and some atypical PKC protein (PRKCI or PRKCZ). Interacts with EXO70 in a GTP-dependent manner. Interacts with GOPC. May be post-translationally modified by both palmitoylation and polyisoprenylation.

It is found in the cytoplasm. Its subcellular location is the cell membrane. With respect to regulation, regulated by guanine nucleotide exchange factors (GEFs) which promote the exchange of bound GDP for free GTP, GTPase activating proteins (GAPs) which increase the GTP hydrolysis activity, and GDP dissociation inhibitors which inhibit the dissociation of the nucleotide from the GTPase. Its function is as follows. Plasma membrane-associated small GTPase which cycles between an active GTP-bound and an inactive GDP-bound state. In active state binds to a variety of effector proteins to regulate cellular responses. Involved in epithelial cell polarization processes. May play a role in CFTR trafficking to the plasma membrane. Causes the formation of thin, actin-rich surface projections called filopodia. The polypeptide is Rho-related GTP-binding protein RhoQ (RHOQ) (Homo sapiens (Human)).